A 638-amino-acid polypeptide reads, in one-letter code: Plasma kallikrein (638 aa).

The signal sequence occupies residues 1–19 (MILFKQATYFISLFATVSC). Apple domains are found at residues 21-104 (CLTQ…LKQC), 111-194 (CHRD…LKPC), 201-284 (CHMN…LLTC), and 292-375 (CHSK…LRLC). 18 disulfides stabilise this stretch: C21–C104, C47–C77, C51–C57, C111–C194, C137–C166, C141–C147, C201–C284, C227–C256, C231–C237, C292–C375, C318–C347, C322–C328, C340–C345, C383–C503, C419–C435, C517–C584, C548–C563, and C574–C602. N127 is a glycosylation site (N-linked (GlcNAc...) asparagine). N-linked (GlcNAc...) asparagine glycosylation is present at N308. The 236-residue stretch at 391–626 (IVGGTNSSWG…YMDWILEKTQ (236 aa)) folds into the Peptidase S1 domain. A glycan (N-linked (GlcNAc...) asparagine) is linked at N396. The active-site Charge relay system is H434. N-linked (GlcNAc...) asparagine glycosylation is present at N453. D483 serves as the catalytic Charge relay system. N494 carries an N-linked (GlcNAc...) asparagine glycan. S578 functions as the Charge relay system in the catalytic mechanism.

The protein belongs to the peptidase S1 family. Plasma kallikrein subfamily. Forms a heterodimer with SERPINA5. The zymogen is activated by factor XIIa, which cleaves the molecule into a light chain, which contains the active site, and a heavy chain, which associates with HMW kininogen. These chains are linked by one or more disulfide bonds. Interacts with iripin-3, a serine protease inhibitor from Ixodes ricinus saliva. Interacts with iripin-1, a serine protease inhibitor from Ixodes ricinus saliva. Found in plasma (at protein level).

The protein resides in the secreted. The enzyme catalyses Cleaves selectively Arg-|-Xaa and Lys-|-Xaa bonds, including Lys-|-Arg and Arg-|-Ser bonds in (human) kininogen to release bradykinin.. Inhibited by SERPINA5. In terms of biological role, participates in the surface-dependent activation of blood coagulation. Activates, in a reciprocal reaction, coagulation factor XII/F12 after binding to negatively charged surfaces. Releases bradykinin from HMW kininogen and may also play a role in the renin-angiotensin system by converting prorenin into renin. This is Plasma kallikrein (KLKB1) from Homo sapiens (Human).